The following is a 201-amino-acid chain: Homeobox protein goosecoid-2 (201 aa).

Disordered regions lie at residues 1-55 (MATA…PEAP), 95-124 (PATP…RRTR), and 179-201 (RHQK…KESC). Residues 95–106 (PATPSPLTAPRA) show a composition bias toward low complexity. A DNA-binding region (homeobox) is located at residues 123 to 182 (TRRHRTIFSEEQLQALEALFVQNQYPDVGTRERLAVRIRLREERVEVWFKNRRAKWRHQK).

This sequence belongs to the paired homeobox family. Bicoid subfamily. As to expression, expressed in adult testis.

The protein resides in the nucleus. Functionally, may have a role in development. May regulate its own transcription. May bind the bicoid consensus sequence TAATCC. The chain is Homeobox protein goosecoid-2 (Gsc2) from Mus musculus (Mouse).